The primary structure comprises 567 residues: PEX5-related protein (567 aa).

The disordered stretch occupies residues serine 56–serine 105. Serine 146 carries the phosphoserine modification. A disordered region spans residues leucine 150–asparagine 169. Phosphoserine is present on residues serine 194, serine 198, and serine 202. TPR repeat units lie at residues tryptophan 267–aspartate 300, alanine 301–asparagine 334, and lysine 336–tyrosine 368. 2 positions are modified to phosphoserine: serine 386 and serine 388. TPR repeat units lie at residues proline 415–aspartate 448, serine 450–phenylalanine 482, and arginine 484–serine 516.

The protein belongs to the peroxisomal targeting signal receptor family. As to quaternary structure, interacts with RAB8B. Forms an obligate 4:4 complex with HCN2. Interacts with HCN3. Interacts with HCN4 with a 4:4 HCN4:PEX5L stoichiometry; reduces the effects of cAMP on the voltage-dependence and rate of activation of HCN4.

Its subcellular location is the cytoplasm. It is found in the membrane. Functionally, accessory subunit of hyperpolarization-activated cyclic nucleotide-gated (HCN) channels, regulating their cell-surface expression and cyclic nucleotide dependence. The protein is PEX5-related protein (Pex5l) of Mus musculus (Mouse).